The sequence spans 308 residues: Glutamyl-Q tRNA(Asp) synthetase (308 aa).

L-glutamate contacts are provided by residues 19–23 and glutamate 55; that span reads RFAPS. The 'HIGH' region motif lies at 22 to 32; the sequence is PSPSGELHFGS. Residues cysteine 111, cysteine 113, tyrosine 125, and cysteine 129 each contribute to the Zn(2+) site. Positions 182 and 200 each coordinate L-glutamate. The short motif at 238 to 242 is the 'KMSKS' region element; the sequence is KLSKQ. Lysine 241 provides a ligand contact to ATP.

This sequence belongs to the class-I aminoacyl-tRNA synthetase family. GluQ subfamily. Requires Zn(2+) as cofactor.

Functionally, catalyzes the tRNA-independent activation of glutamate in presence of ATP and the subsequent transfer of glutamate onto a tRNA(Asp). Glutamate is transferred on the 2-amino-5-(4,5-dihydroxy-2-cyclopenten-1-yl) moiety of the queuosine in the wobble position of the QUC anticodon. The chain is Glutamyl-Q tRNA(Asp) synthetase from Escherichia coli O157:H7.